The chain runs to 390 residues: Transforming growth factor beta-1 proprotein (390 aa).

A signal peptide spans 1 to 29 (MPPSGLRLLPLLLPLLWLLVLTPGRPAAG). The straightjacket domain stretch occupies residues 30 to 74 (LSTCKTIDMELVKRKRIEAIRGQILSKLRLASPPSQGEVPPGPLP). Residues 75–271 (EAVLALYNST…ATPLERAQHL (197 aa)) form an arm domain region. 3 N-linked (GlcNAc...) asparagine glycosylation sites follow: Asn-82, Asn-136, and Asn-176. Residues 226–252 (DSRDNTLQVDINGLSSSRRGDLATIHG) are bowtie tail. The short motif at 244 to 246 (RGD) is the Cell attachment site element. 4 cysteine pairs are disulfide-bonded: Cys-285–Cys-294, Cys-293–Cys-356, Cys-322–Cys-387, and Cys-326–Cys-389.

Belongs to the TGF-beta family. Homodimer; disulfide-linked. Interacts with the serine proteases, HTRA1 and HTRA3: the interaction with either inhibits TGFB1-mediated signaling and the HTRA protease activity is required for this inhibition. May interact with THSD4; this interaction may lead to sequestration by FBN1 microfibril assembly and attenuation of TGFB signaling. Interacts with CD109, DPT and ASPN. Interacts with EFEMP2. Interacts with TSKU; the interaction contributes to regulation of the hair cycle. Interacts with TGFBR3. In terms of assembly, homodimer; disulfide-linked. Interacts with transforming growth factor beta-1 (TGF-beta-1) chain; interaction is non-covalent and maintains TGF-beta-1 in a latent state; each latency-associated peptide (LAP) monomer interacts with TGF-beta-1 in the other monomer. Interacts with LTBP1; leading to regulation of TGF-beta-1 activation. Interacts with LRRC32/GARP; leading to regulation of TGF-beta-1 activation on the surface of activated regulatory T-cells (Tregs). Interacts with LRRC33/NRROS; leading to regulation of TGF-beta-1 activation in macrophages and microglia. Interacts (via cell attachment site) with integrins ITGAV and ITGB6 (ITGAV:ITGB6), leading to release of the active TGF-beta-1. Interacts with NREP; the interaction results in a decrease in TGFB1 autoinduction. Interacts with HSP90AB1; inhibits latent TGFB1 activation. As to quaternary structure, homodimer; disulfide-linked. Interacts with TGF-beta receptors (TGFBR1 and TGFBR2), leading to signal transduction. Transforming growth factor beta-1 proprotein: The precursor proprotein is cleaved in the Golgi apparatus by FURIN to form Transforming growth factor beta-1 (TGF-beta-1) and Latency-associated peptide (LAP) chains, which remain non-covalently linked, rendering TGF-beta-1 inactive. In terms of processing, N-glycosylated. Deglycosylation leads to activation of Transforming growth factor beta-1 (TGF-beta-1); mechanisms triggering deglycosylation-driven activation of TGF-beta-1 are however unclear.

The protein resides in the secreted. The protein localises to the extracellular space. Its subcellular location is the extracellular matrix. In terms of biological role, transforming growth factor beta-1 proprotein: Precursor of the Latency-associated peptide (LAP) and Transforming growth factor beta-1 (TGF-beta-1) chains, which constitute the regulatory and active subunit of TGF-beta-1, respectively. Its function is as follows. Required to maintain the Transforming growth factor beta-1 (TGF-beta-1) chain in a latent state during storage in extracellular matrix. Associates non-covalently with TGF-beta-1 and regulates its activation via interaction with 'milieu molecules', such as LTBP1, LRRC32/GARP and LRRC33/NRROS, that control activation of TGF-beta-1. Interaction with LRRC33/NRROS regulates activation of TGF-beta-1 in macrophages and microglia. Interaction with LRRC32/GARP controls activation of TGF-beta-1 on the surface of activated regulatory T-cells (Tregs). Interaction with integrins (ITGAV:ITGB6 or ITGAV:ITGB8) results in distortion of the Latency-associated peptide chain and subsequent release of the active TGF-beta-1. Multifunctional protein that regulates the growth and differentiation of various cell types and is involved in various processes, such as normal development, immune function, microglia function and responses to neurodegeneration. Activation into mature form follows different steps: following cleavage of the proprotein in the Golgi apparatus, Latency-associated peptide (LAP) and Transforming growth factor beta-1 (TGF-beta-1) chains remain non-covalently linked rendering TGF-beta-1 inactive during storage in extracellular matrix. At the same time, LAP chain interacts with 'milieu molecules', such as LTBP1, LRRC32/GARP and LRRC33/NRROS that control activation of TGF-beta-1 and maintain it in a latent state during storage in extracellular milieus. TGF-beta-1 is released from LAP by integrins (ITGAV:ITGB6 or ITGAV:ITGB8): integrin-binding to LAP stabilizes an alternative conformation of the LAP bowtie tail and results in distortion of the LAP chain and subsequent release of the active TGF-beta-1. Once activated following release of LAP, TGF-beta-1 acts by binding to TGF-beta receptors (TGFBR1 and TGFBR2), which transduce signal. While expressed by many cells types, TGF-beta-1 only has a very localized range of action within cell environment thanks to fine regulation of its activation by Latency-associated peptide chain (LAP) and 'milieu molecules'. Plays an important role in bone remodeling: acts as a potent stimulator of osteoblastic bone formation, causing chemotaxis, proliferation and differentiation in committed osteoblasts. Can promote either T-helper 17 cells (Th17) or regulatory T-cells (Treg) lineage differentiation in a concentration-dependent manner. At high concentrations, leads to FOXP3-mediated suppression of RORC and down-regulation of IL-17 expression, favoring Treg cell development. At low concentrations in concert with IL-6 and IL-21, leads to expression of the IL-17 and IL-23 receptors, favoring differentiation to Th17 cells. Stimulates sustained production of collagen through the activation of CREB3L1 by regulated intramembrane proteolysis (RIP). Mediates SMAD2/3 activation by inducing its phosphorylation and subsequent translocation to the nucleus. Positively regulates odontoblastic differentiation in dental papilla cells, via promotion of IPO7-mediated translocation of phosphorylated SMAD2 to the nucleus and subsequent transcription of target genes. Can induce epithelial-to-mesenchymal transition (EMT) and cell migration in various cell types. The polypeptide is Transforming growth factor beta-1 proprotein (TGFB1) (Mustela putorius furo (European domestic ferret)).